A 34-amino-acid chain; its full sequence is Small, acid-soluble spore protein M (34 aa).

Basic residues predominate over residues 1–10 (MKTRPKKAGQ). The interval 1 to 34 (MKTRPKKAGQQKKTESKAIDSLDKKLGGPNRPST) is disordered. Residues 12–26 (KKTESKAIDSLDKKL) show a composition bias toward basic and acidic residues.

The protein localises to the spore core. The sequence is that of Small, acid-soluble spore protein M (sspM) from Bacillus subtilis (strain 168).